We begin with the raw amino-acid sequence, 58 residues long: Small ribosomal subunit protein bS21 (58 aa).

Positions 35–58 (REHYEKPSVKRKKKSEAARKRKFK) are disordered. Over residues 43–58 (VKRKKKSEAARKRKFK) the composition is skewed to basic residues.

Belongs to the bacterial ribosomal protein bS21 family.

The sequence is that of Small ribosomal subunit protein bS21 from Ruminiclostridium cellulolyticum (strain ATCC 35319 / DSM 5812 / JCM 6584 / H10) (Clostridium cellulolyticum).